The primary structure comprises 421 residues: Ankyrin repeat domain-containing protein 61 (421 aa).

8 ANK repeats span residues 27–57 (TLHS…NQPL), 74–103 (QPIF…DPEV), 107–146 (QGFT…NAVL), 166–195 (NKHS…QVNA), 199–228 (SSMT…NVNC), 233–272 (TGNT…QVNA), 276–305 (EGQT…NVNI), and 309–342 (NGES…PLRL).

The sequence is that of Ankyrin repeat domain-containing protein 61 (Ankrd61) from Mus musculus (Mouse).